The primary structure comprises 579 residues: Glypican-2 (579 aa).

The first 23 residues, 1–23 (MSALRPLLLLLLPLCPGPGPGPG), serve as a signal peptide directing secretion. Residues Ser55, Ser92, and Ser155 are each glycosylated (O-linked (Xyl...) (heparan sulfate) serine). Disordered stretches follow at residues 444-468 (GGSPAEQVNNPELKVDASGPDVPTR) and 485-555 (ALGH…RSGG). O-linked (Xyl...) (heparan sulfate) serine glycans are attached at residues Ser500 and Ser502. Positions 520–529 (PARPPRPPYP) are enriched in pro residues. Gly554 carries the GPI-anchor amidated glycine lipid modification. The propeptide at 555–579 (GASIGFHTQTILILSLSALALLGPR) is removed in mature form.

This sequence belongs to the glypican family. In terms of assembly, interacts (via heparan sulfate) with PTN; this interaction promotes neurite outgrowth through binding of PTN with chondroitin sulfate of proteoglycans, thereby releasing PTPRS of chondroitin sulfate proteoglycans (CSPGs) and leading to binding with heparan sulfate of GPC2. Interacts (heparan sulfate chain) with MDK; this interaction is inhibited by heparin followed by chondroitin sulfate E; this interaction induces GPC2 clustering through heparan sulfate chain; this interaction induces neuronal cell adhesion and neurite outgrowth.

Its subcellular location is the cell membrane. The protein localises to the secreted. It is found in the extracellular space. Functionally, cell surface proteoglycan that bears heparan sulfate. May fulfill a function related to the motile behaviors of developing neurons. The sequence is that of Glypican-2 (GPC2) from Homo sapiens (Human).